Here is a 123-residue protein sequence, read N- to C-terminus: UPF0102 protein PSEEN4497 (123 aa).

The protein belongs to the UPF0102 family.

The polypeptide is UPF0102 protein PSEEN4497 (Pseudomonas entomophila (strain L48)).